Here is a 94-residue protein sequence, read N- to C-terminus: Acylphosphatase (94 aa).

Residues 7-94 (RLTARITGVV…GEFDDFRIID (88 aa)) form the Acylphosphatase-like domain. Active-site residues include Arg-22 and Asn-40.

The protein belongs to the acylphosphatase family.

It carries out the reaction an acyl phosphate + H2O = a carboxylate + phosphate + H(+). In Paenarthrobacter aurescens (strain TC1), this protein is Acylphosphatase (acyP).